The primary structure comprises 686 residues: Probable metal-nicotianamine transporter YSL4 (686 aa).

14 helical membrane-spanning segments follow: residues 27–47, 53–73, 96–116, 151–171, 203–223, 264–284, 308–328, 373–393, 405–425, 441–461, 488–508, 554–574, 596–616, and 629–649; these read WLVTPRAMAVAVLLGIVFCFV, MMTGFVPALNMPVTVLSFFLL, MFLITCVITCLNLAITGGFAT, FFLIGMAGVLSNIPLNQIMII, VMTIFKVFFGSFSWSIFQWFY, IVNFGLLFGAIISWGFLYPYL, VFISVTLIVTDGLINFLILVT, IPMFVPVAAYVAWTAISMVAM, VGVLYLAIPVVGFCNTYATGL, IFAAWIARPGAIVASLLVSGI, AMIAGQVFGVALSSVVSPCIF, CVELCVIAVLVTIAIDALVLV, FFAGSYFTLDMCLGGLLLLLW, and AAVAAGLICGEGLFTLPSALL.

Belongs to the YSL (TC 2.A.67.2) family.

The protein resides in the membrane. In terms of biological role, may be involved in the transport of nicotianamine-chelated metals. This Oryza sativa subsp. japonica (Rice) protein is Probable metal-nicotianamine transporter YSL4 (YSL4).